Consider the following 367-residue polypeptide: Methylthioribose-1-phosphate isomerase (367 aa).

Substrate-binding positions include 48-50 (RGA), Arg-91, and Gln-215. The active-site Proton donor is the Asp-256. 266–267 (NK) contacts substrate.

It belongs to the eIF-2B alpha/beta/delta subunits family. MtnA subfamily.

It catalyses the reaction 5-(methylsulfanyl)-alpha-D-ribose 1-phosphate = 5-(methylsulfanyl)-D-ribulose 1-phosphate. The protein operates within amino-acid biosynthesis; L-methionine biosynthesis via salvage pathway; L-methionine from S-methyl-5-thio-alpha-D-ribose 1-phosphate: step 1/6. In terms of biological role, catalyzes the interconversion of methylthioribose-1-phosphate (MTR-1-P) into methylthioribulose-1-phosphate (MTRu-1-P). This chain is Methylthioribose-1-phosphate isomerase, found in Syntrophus aciditrophicus (strain SB).